The chain runs to 319 residues: Phospho-N-acetylmuramoyl-pentapeptide-transferase (319 aa).

10 helical membrane-spanning segments follow: residues L5–F25, T51–W71, T79–I99, L116–F136, S149–L169, G172–A192, N197–F217, I224–F244, L252–F272, and V299–G319.

Belongs to the glycosyltransferase 4 family. MraY subfamily. Mg(2+) serves as cofactor.

The protein resides in the cell membrane. It catalyses the reaction UDP-N-acetyl-alpha-D-muramoyl-L-alanyl-gamma-D-glutamyl-L-lysyl-D-alanyl-D-alanine + di-trans,octa-cis-undecaprenyl phosphate = Mur2Ac(oyl-L-Ala-gamma-D-Glu-L-Lys-D-Ala-D-Ala)-di-trans,octa-cis-undecaprenyl diphosphate + UMP. It participates in cell wall biogenesis; peptidoglycan biosynthesis. In terms of biological role, catalyzes the initial step of the lipid cycle reactions in the biosynthesis of the cell wall peptidoglycan: transfers peptidoglycan precursor phospho-MurNAc-pentapeptide from UDP-MurNAc-pentapeptide onto the lipid carrier undecaprenyl phosphate, yielding undecaprenyl-pyrophosphoryl-MurNAc-pentapeptide, known as lipid I. This Lactobacillus gasseri (strain ATCC 33323 / DSM 20243 / BCRC 14619 / CIP 102991 / JCM 1131 / KCTC 3163 / NCIMB 11718 / NCTC 13722 / AM63) protein is Phospho-N-acetylmuramoyl-pentapeptide-transferase.